Consider the following 27-residue polypeptide: NEDCTPWTSTLIXPLPXCRNYVXXQAC.

The protein belongs to the protease inhibitor I6 (cereal trypsin/alpha-amylase inhibitor) family. In terms of tissue distribution, developing endosperm.

The protein resides in the secreted. Its function is as follows. Alpha-amylase/trypsin inhibitor. It could be involved in insect defense mechanisms. In Triticum aestivum (Wheat), this protein is Alpha-amylase/trypsin inhibitor CM17.